The primary structure comprises 103 residues: Glutaredoxin-C11 (103 aa).

The Glutaredoxin domain occupies 1–102 (MERIRDLSSK…QMLKDAKAIW (102 aa)). Residues cysteine 21 and cysteine 24 are joined by a disulfide bond.

The protein belongs to the glutaredoxin family. CC-type subfamily.

It is found in the cytoplasm. Functionally, has a glutathione-disulfide oxidoreductase activity in the presence of NADPH and glutathione reductase. Reduces low molecular weight disulfides and proteins. The chain is Glutaredoxin-C11 (GRXC11) from Arabidopsis thaliana (Mouse-ear cress).